A 156-amino-acid polypeptide reads, in one-letter code: Small ribosomal subunit protein uS7 (156 aa).

This sequence belongs to the universal ribosomal protein uS7 family. As to quaternary structure, part of the 30S ribosomal subunit. Contacts proteins S9 and S11.

In terms of biological role, one of the primary rRNA binding proteins, it binds directly to 16S rRNA where it nucleates assembly of the head domain of the 30S subunit. Is located at the subunit interface close to the decoding center, probably blocks exit of the E-site tRNA. The sequence is that of Small ribosomal subunit protein uS7 from Mycobacterium avium (strain 104).